Consider the following 64-residue polypeptide: MALPKYKTSRANTHSRRANWKAKAAQTVTCPNCGAPTLPHMACPSCGSFRGRVYREAVRSIHTK.

A disordered region spans residues 1–20 (MALPKYKTSRANTHSRRANW).

It belongs to the bacterial ribosomal protein bL32 family.

The chain is Large ribosomal subunit protein bL32 from Bifidobacterium adolescentis (strain ATCC 15703 / DSM 20083 / NCTC 11814 / E194a).